We begin with the raw amino-acid sequence, 357 residues long: Probable cinnamyl alcohol dehydrogenase 2 (357 aa).

Cys47 provides a ligand contact to Zn(2+). NADP(+) is bound at residue Ser49. 7 residues coordinate Zn(2+): His69, Glu70, Cys100, Cys103, Cys106, Cys114, and Cys163. Residues Thr167, 188–193 (GLGGVG), 211–216 (SSSDKK), Thr251, Gly275, and 298–300 (SFI) each bind NADP(+).

This sequence belongs to the zinc-containing alcohol dehydrogenase family. As to quaternary structure, homodimer. The cofactor is Zn(2+).

It catalyses the reaction (E)-cinnamyl alcohol + NADP(+) = (E)-cinnamaldehyde + NADPH + H(+). It carries out the reaction (E)-coniferol + NADP(+) = (E)-coniferaldehyde + NADPH + H(+). The enzyme catalyses (E)-sinapyl alcohol + NADP(+) = (E)-sinapaldehyde + NADPH + H(+). The catalysed reaction is (E)-4-coumaroyl alcohol + NADP(+) = (E)-4-coumaraldehyde + NADPH + H(+). It catalyses the reaction (E)-caffeyl alcohol + NADP(+) = (E)-caffeyl aldehyde + NADPH + H(+). It participates in aromatic compound metabolism; phenylpropanoid biosynthesis. Involved in lignin biosynthesis. Catalyzes the final step specific for the production of lignin monomers. Catalyzes the NADPH-dependent reduction of coniferaldehyde, 5-hydroxyconiferaldehyde, sinapaldehyde, 4-coumaraldehyde and caffeyl aldehyde to their respective alcohols. This chain is Probable cinnamyl alcohol dehydrogenase 2 (CAD2), found in Picea abies (Norway spruce).